Consider the following 520-residue polypeptide: NADH-quinone oxidoreductase subunit N (520 aa).

14 helical membrane passes run 13-33 (ALLPEMLLSGGAMLLLLASVW), 55-75 (FGVILCLVVGLAVVIAWGDGA), 87-107 (GFRWAVDLVILLGTALALMLL), 115-135 (AAFGPEVPSLMLLASTGMMVL), 141-161 (LMFVFLGVELMSLAVYVLAGV), 176-196 (FLLGAISSGFLLYGMALLFGA), 219-239 (FMSGVALLLVGLAFKVAAAPF), 250-270 (APLPVTAFMSATVKTAAFAVF), 285-305 (WHMGLWWLAAVTMVVGNVFAL), 313-333 (MLAYSSIAHAGYLLVSIIVGD), 339-359 (ALIFYVVSYTLATMGAFGVLI), 383-403 (WLAIAMTVFLLAFMGMPVLGG), 425-445 (ILAVVLVIASAVSAAYYLAVV), and 468-488 (SLIATAAVALLVFGLYPTPIM). The span at 494–508 (ATTTTSPTSNPAAPR) shows a compositional bias: low complexity. Positions 494 to 520 (ATTTTSPTSNPAAPRGEVRLQTASVPR) are disordered.

It belongs to the complex I subunit 2 family. As to quaternary structure, NDH-1 is composed of 14 different subunits. Subunits NuoA, H, J, K, L, M, N constitute the membrane sector of the complex.

Its subcellular location is the cell inner membrane. The enzyme catalyses a quinone + NADH + 5 H(+)(in) = a quinol + NAD(+) + 4 H(+)(out). In terms of biological role, NDH-1 shuttles electrons from NADH, via FMN and iron-sulfur (Fe-S) centers, to quinones in the respiratory chain. The immediate electron acceptor for the enzyme in this species is believed to be ubiquinone. Couples the redox reaction to proton translocation (for every two electrons transferred, four hydrogen ions are translocated across the cytoplasmic membrane), and thus conserves the redox energy in a proton gradient. This Gemmatimonas aurantiaca (strain DSM 14586 / JCM 11422 / NBRC 100505 / T-27) protein is NADH-quinone oxidoreductase subunit N.